A 69-amino-acid polypeptide reads, in one-letter code: Neurotoxin Cex3 (69 aa).

A signal peptide is located at residue Ala-1. Residues 2–67 (KDGYLVNKST…TYPLPNKSCG (66 aa)) enclose the LCN-type CS-alpha/beta domain. 4 cysteine pairs are disulfide-bonded: Cys-13–Cys-66, Cys-17–Cys-42, Cys-26–Cys-47, and Cys-30–Cys-49. Cys-66 is modified (cysteine amide). Positions 67 to 69 (GRK) are excised as a propeptide.

This sequence belongs to the long (4 C-C) scorpion toxin superfamily. Sodium channel inhibitor family. Beta subfamily. Expressed by the venom gland.

It localises to the secreted. Functionally, beta toxins bind voltage-independently at site-4 of sodium channels (Nav) and shift the voltage of activation toward more negative potentials thereby affecting sodium channel activation and promoting spontaneous and repetitive firing. The sequence is that of Neurotoxin Cex3 from Centruroides exilicauda (Bark scorpion).